Consider the following 712-residue polypeptide: Translation initiation factor eIF2B subunit epsilon (712 aa).

The interval 1–20 (MAGKKGQKKSGLGNHGKNSD) is disordered. Residues Ser-478, Ser-481, Ser-507, Ser-525, Ser-538, and Ser-707 each carry the phosphoserine modification. The W2 domain maps to 539–710 (EFEDEDFEKE…QNADEESSSE (172 aa)).

It belongs to the eIF-2B gamma/epsilon subunits family. Component of the translation initiation factor 2B (eIF2B) complex which is a heterodecamer of two sets of five different subunits: alpha, beta, gamma, delta and epsilon. Subunits alpha, beta and delta comprise a regulatory subcomplex and subunits epsilon and gamma comprise a catalytic subcomplex. Within the complex, the hexameric regulatory complex resides at the center, with the two heterodimeric catalytic subcomplexes bound on opposite sides.

The protein resides in the cytoplasm. It is found in the cytosol. Acts as a catalytic component of the translation initiation factor 2B (eIF2B) complex, which catalyzes the exchange of GDP for GTP on eukaryotic initiation factor 2 (eIF2) and is regulated by phosphorylated eIF2. Its guanine nucleotide exchange factor activity is repressed when bound to eIF2 complex phosphorylated on the alpha subunit, thereby limiting the amount of methionyl-initiator methionine tRNA available to the ribosome and consequently global translation is repressed. It activates the synthesis of GCN4 in yeast under amino acid starvation conditions by suppressing the inhibitory effects of multiple AUG codons present in the leader of GCN4 mRNA. It may promote either repression or activation of GCN4 expression depending on amino acid availability. GCD6 and GCD7 repress GCN4 expression at the translational level by ensuring that ribosomes which have translated UORF1 will reinitiate at UORF2, -3, or -4 and thus fail to reach the GCN4 start site. This is Translation initiation factor eIF2B subunit epsilon (GCD6) from Saccharomyces cerevisiae (strain ATCC 204508 / S288c) (Baker's yeast).